A 649-amino-acid chain; its full sequence is Glycerol-3-phosphate dehydrogenase, mitochondrial (649 aa).

Position 69 to 97 (69 to 97 (DVLIIGGGATGTGCALDAATRGLNVALVE)) interacts with FAD.

The protein belongs to the FAD-dependent glycerol-3-phosphate dehydrogenase family. It depends on FAD as a cofactor.

The protein localises to the mitochondrion inner membrane. Its subcellular location is the mitochondrion intermembrane space. It catalyses the reaction a quinone + sn-glycerol 3-phosphate = dihydroxyacetone phosphate + a quinol. Its pathway is polyol metabolism; glycerol degradation via glycerol kinase pathway; glycerone phosphate from sn-glycerol 3-phosphate (anaerobic route): step 1/1. This is Glycerol-3-phosphate dehydrogenase, mitochondrial (GUT2) from Saccharomyces cerevisiae (strain ATCC 204508 / S288c) (Baker's yeast).